Consider the following 85-residue polypeptide: Large ribosomal subunit protein bL31B (85 aa).

The protein belongs to the bacterial ribosomal protein bL31 family. Type B subfamily. In terms of assembly, part of the 50S ribosomal subunit.

The polypeptide is Large ribosomal subunit protein bL31B (Clavibacter michiganensis subsp. michiganensis (strain NCPPB 382)).